Reading from the N-terminus, the 288-residue chain is ATP phosphoribosyltransferase (288 aa).

The protein belongs to the ATP phosphoribosyltransferase family. Long subfamily. Mg(2+) serves as cofactor.

It is found in the cytoplasm. The enzyme catalyses 1-(5-phospho-beta-D-ribosyl)-ATP + diphosphate = 5-phospho-alpha-D-ribose 1-diphosphate + ATP. The protein operates within amino-acid biosynthesis; L-histidine biosynthesis; L-histidine from 5-phospho-alpha-D-ribose 1-diphosphate: step 1/9. Feedback inhibited by histidine. Catalyzes the condensation of ATP and 5-phosphoribose 1-diphosphate to form N'-(5'-phosphoribosyl)-ATP (PR-ATP). Has a crucial role in the pathway because the rate of histidine biosynthesis seems to be controlled primarily by regulation of HisG enzymatic activity. The protein is ATP phosphoribosyltransferase of Methanococcus maripaludis (strain C6 / ATCC BAA-1332).